The sequence spans 366 residues: Cobalt-precorrin-5B C(1)-methyltransferase (366 aa).

This sequence belongs to the CbiD family.

The catalysed reaction is Co-precorrin-5B + S-adenosyl-L-methionine = Co-precorrin-6A + S-adenosyl-L-homocysteine. The protein operates within cofactor biosynthesis; adenosylcobalamin biosynthesis; cob(II)yrinate a,c-diamide from sirohydrochlorin (anaerobic route): step 6/10. Its function is as follows. Catalyzes the methylation of C-1 in cobalt-precorrin-5B to form cobalt-precorrin-6A. The polypeptide is Cobalt-precorrin-5B C(1)-methyltransferase (Hahella chejuensis (strain KCTC 2396)).